A 413-amino-acid polypeptide reads, in one-letter code: Methylaspartate ammonia-lyase (413 aa).

Position 172 (glutamine 172) interacts with (2S,3S)-3-methyl-L-aspartate. Mg(2+) contacts are provided by aspartate 238, glutamate 273, and aspartate 307. A (2S,3S)-3-methyl-L-aspartate-binding site is contributed by glutamine 329. The active-site Proton acceptor is the lysine 331. A (2S,3S)-3-methyl-L-aspartate-binding site is contributed by 360-361 (TC).

The protein belongs to the methylaspartate ammonia-lyase family. As to quaternary structure, homodimer. Requires Mg(2+) as cofactor.

It carries out the reaction (2S,3S)-3-methyl-L-aspartate = mesaconate + NH4(+). Its pathway is amino-acid degradation; L-glutamate degradation via mesaconate pathway; acetate and pyruvate from L-glutamate: step 2/4. In terms of biological role, involved in the methylaspartate cycle. Catalyzes the formation of the alpha,beta-unsaturated bond by the reversible anti elimination of ammonia from L-threo-beta-methylaspartate (L-threo-(2S,3S)-3-methylaspartate) to give mesaconate. The sequence is that of Methylaspartate ammonia-lyase from Citrobacter amalonaticus.